Reading from the N-terminus, the 503-residue chain is Maturase K (503 aa).

Belongs to the intron maturase 2 family. MatK subfamily.

The protein localises to the plastid. It localises to the chloroplast. Usually encoded in the trnK tRNA gene intron. Probably assists in splicing its own and other chloroplast group II introns. This Lathyrus vestitus (Pacific pea) protein is Maturase K.